A 318-amino-acid polypeptide reads, in one-letter code: NADH-ubiquinone oxidoreductase chain 1 (318 aa).

8 helical membrane passes run 2 to 22 (LLTN…FLTL), 69 to 89 (LMFI…WAPL), 102 to 122 (ILFI…SGWA), 147 to 167 (AIIL…TLTI), 172 to 192 (MWLI…TLAE), 231 to 251 (IILM…NPLF), 253 to 273 (ELHT…FLWI), and 294 to 314 (LPLT…LAGI).

This sequence belongs to the complex I subunit 1 family.

The protein localises to the mitochondrion inner membrane. It carries out the reaction a ubiquinone + NADH + 5 H(+)(in) = a ubiquinol + NAD(+) + 4 H(+)(out). Its function is as follows. Core subunit of the mitochondrial membrane respiratory chain NADH dehydrogenase (Complex I) that is believed to belong to the minimal assembly required for catalysis. Complex I functions in the transfer of electrons from NADH to the respiratory chain. The immediate electron acceptor for the enzyme is believed to be ubiquinone. This Bradypus variegatus (Brown-throated three-fingered sloth) protein is NADH-ubiquinone oxidoreductase chain 1 (MT-ND1).